The chain runs to 399 residues: Formate-dependent phosphoribosylglycinamide formyltransferase (399 aa).

N(1)-(5-phospho-beta-D-ribosyl)glycinamide is bound by residues Glu21–Leu22 and Glu81. ATP is bound by residues Arg114, Lys156, Ser161–Gln166, Glu196–Ile199, and Glu204. An ATP-grasp domain is found at Arg119 to Leu314. Mg(2+) contacts are provided by Glu273 and Glu285. Residues Asp292, Lys361, and Arg368–Arg369 contribute to the N(1)-(5-phospho-beta-D-ribosyl)glycinamide site. The segment at Met370 to Thr399 is disordered.

Belongs to the PurK/PurT family. As to quaternary structure, homodimer.

The catalysed reaction is N(1)-(5-phospho-beta-D-ribosyl)glycinamide + formate + ATP = N(2)-formyl-N(1)-(5-phospho-beta-D-ribosyl)glycinamide + ADP + phosphate + H(+). Its pathway is purine metabolism; IMP biosynthesis via de novo pathway; N(2)-formyl-N(1)-(5-phospho-D-ribosyl)glycinamide from N(1)-(5-phospho-D-ribosyl)glycinamide (formate route): step 1/1. Its function is as follows. Involved in the de novo purine biosynthesis. Catalyzes the transfer of formate to 5-phospho-ribosyl-glycinamide (GAR), producing 5-phospho-ribosyl-N-formylglycinamide (FGAR). Formate is provided by PurU via hydrolysis of 10-formyl-tetrahydrofolate. This Dechloromonas aromatica (strain RCB) protein is Formate-dependent phosphoribosylglycinamide formyltransferase.